The sequence spans 692 residues: Protein arginine N-methyltransferase 7 (692 aa).

2 SAM-dependent MTase PRMT-type domains span residues 14–359 (ENSW…YSLW) and 368–692 (AKTV…QEKR).

The protein belongs to the class I-like SAM-binding methyltransferase superfamily. Protein arginine N-methyltransferase family. PRMT7 subfamily.

Functionally, essential arginine methyltransferase that can both catalyze the formation of omega-N monomethylarginine (MMA) and symmetrical dimethylarginine (sDMA). Specifically mediates the symmetrical dimethylation of arginine residues in the small nuclear ribonucleoproteins SmD1 and SmD3. The polypeptide is Protein arginine N-methyltransferase 7 (Art7) (Drosophila persimilis (Fruit fly)).